The chain runs to 309 residues: Malate dehydrogenase (309 aa).

Residues 6 to 11 (GSGRVG) and Asp31 contribute to the NAD(+) site. Substrate contacts are provided by Arg80 and Arg86. NAD(+) contacts are provided by residues Asn93 and 116 to 118 (TTN). Residues Asn118 and Arg149 each contribute to the substrate site. The active-site Proton acceptor is His173.

It belongs to the LDH/MDH superfamily. Homotetramer.

The catalysed reaction is (S)-malate + NAD(+) = oxaloacetate + NADH + H(+). Functionally, catalyzes the reversible oxidation of malate to oxaloacetate. Exhibits higher specific activity for oxaloacetate reduction than for malate oxidation in vitro. Has a strong preference for NAD. Can use NADPH for oxaloacetate reduction, but activity decreases more than 90%. No activity detected with NADP(+) and malate. In Pyrobaculum islandicum (strain DSM 4184 / JCM 9189 / GEO3), this protein is Malate dehydrogenase.